The primary structure comprises 68 residues: uncharacterized protein (68 aa).

Positions 1–15 (MTIIFLICLDASTQS) are cleaved as a signal peptide. The segment at 14-68 (QSTTNNSINNNNNNNNNNNNNNNNNNNNNNNNNNNNNNNNNNNNNNSKVFDFNIF) is disordered. N-linked (GlcNAc...) asparagine glycans are attached at residues Asn18 and Asn58. The span at 22 to 59 (NNNNNNNNNNNNNNNNNNNNNNNNNNNNNNNNNNNNNN) shows a compositional bias: low complexity.

It is found in the secreted. This is an uncharacterized protein from Dictyostelium discoideum (Social amoeba).